We begin with the raw amino-acid sequence, 212 residues long: Probable GTP-binding protein EngB (212 aa).

Residues 38-210 (SLPEIAFVGK…KASLAKCIKP (173 aa)) form the EngB-type G domain. GTP is bound by residues 46-53 (GKSNVGKS), 73-77 (GRTRQ), 91-94 (DLPG), 158-161 (TKSD), and 189-191 (VSS). Residues serine 53 and threonine 75 each contribute to the Mg(2+) site.

The protein belongs to the TRAFAC class TrmE-Era-EngA-EngB-Septin-like GTPase superfamily. EngB GTPase family. The cofactor is Mg(2+).

In terms of biological role, necessary for normal cell division and for the maintenance of normal septation. In Rickettsia felis (strain ATCC VR-1525 / URRWXCal2) (Rickettsia azadi), this protein is Probable GTP-binding protein EngB.